Here is a 283-residue protein sequence, read N- to C-terminus: Urease accessory protein UreD (283 aa).

Residues 1–20 (MTQTQPVGTLRLTIDDQGPQ) are disordered.

This sequence belongs to the UreD family. As to quaternary structure, ureD, UreF and UreG form a complex that acts as a GTP-hydrolysis-dependent molecular chaperone, activating the urease apoprotein by helping to assemble the nickel containing metallocenter of UreC. The UreE protein probably delivers the nickel.

It is found in the cytoplasm. Its function is as follows. Required for maturation of urease via the functional incorporation of the urease nickel metallocenter. In Corynebacterium glutamicum (strain R), this protein is Urease accessory protein UreD.